Consider the following 143-residue polypeptide: Ribosome-binding factor A (143 aa).

Positions 123 to 143 (DNSLQENYKDSDKETKVEKLR) are disordered.

It belongs to the RbfA family. Monomer. Binds 30S ribosomal subunits, but not 50S ribosomal subunits or 70S ribosomes.

It localises to the cytoplasm. Its function is as follows. One of several proteins that assist in the late maturation steps of the functional core of the 30S ribosomal subunit. Associates with free 30S ribosomal subunits (but not with 30S subunits that are part of 70S ribosomes or polysomes). Required for efficient processing of 16S rRNA. May interact with the 5'-terminal helix region of 16S rRNA. The chain is Ribosome-binding factor A from Francisella philomiragia subsp. philomiragia (strain ATCC 25017 / CCUG 19701 / FSC 153 / O#319-036).